We begin with the raw amino-acid sequence, 546 residues long: ATP synthase subunit alpha (546 aa).

Residue 173–180 (GDRQTGKT) participates in ATP binding. Residues 520-546 (VDKKTAPKSVTPVDQEQIKAGKAQEKK) form a disordered region. Positions 535–546 (EQIKAGKAQEKK) are enriched in basic and acidic residues.

This sequence belongs to the ATPase alpha/beta chains family. F-type ATPases have 2 components, CF(1) - the catalytic core - and CF(0) - the membrane proton channel. CF(1) has five subunits: alpha(3), beta(3), gamma(1), delta(1), epsilon(1). CF(0) has three main subunits: a(1), b(2) and c(9-12). The alpha and beta chains form an alternating ring which encloses part of the gamma chain. CF(1) is attached to CF(0) by a central stalk formed by the gamma and epsilon chains, while a peripheral stalk is formed by the delta and b chains.

Its subcellular location is the cell membrane. The catalysed reaction is ATP + H2O + 4 H(+)(in) = ADP + phosphate + 5 H(+)(out). In terms of biological role, produces ATP from ADP in the presence of a proton gradient across the membrane. The alpha chain is a regulatory subunit. In Bifidobacterium animalis subsp. lactis (strain AD011), this protein is ATP synthase subunit alpha.